We begin with the raw amino-acid sequence, 406 residues long: MLYPRNLALFSLLSLSSAAPSQVERSPDAVLKPRAVCTPTAGGSPSIDDVPAIRKAIASCGNGGTIVFPAGSTYYLNSVLDLAGCSNCDIQVEGVLKFSGSTEYWGGKTAMLNIDMINGLRLRSLTGSGVIDGNGQNAYDRFASDKNYKRPTLLYITGGSNIEVSGLRQKNPPNVFNSVKGDTQHVTFKNLRMDATSNSQNPPKNTDGFDIGASTHVTISSVSVTNDDDCVAFKPGSNYVTVEDVTCTGSHGISVGSLGKSGPDVVQNILAHRITMIESTKAAGIKTYPSGNGHGLSTVKNVTFSDFNVRGCDYAFQIESCYGESESYCESNPGNAILQGIVVKGFSGTTSGKYDPVVANLNCGARGTCDVSMSAFSVKAPSGKATVLCDNTPSSLGVSCTSGASG.

The N-terminal stretch at 1 to 18 (MLYPRNLALFSLLSLSSA) is a signal peptide. PbH1 repeat units lie at residues 183 to 213 (TQHV…DIGA), 214 to 235 (STHV…AFKP), 237 to 257 (SNYV…SVGS), and 299 to 320 (VKNV…QIES). Residue Asp228 is the Proton donor of the active site. The active site involves His251. Asn301 carries N-linked (GlcNAc...) asparagine glycosylation.

It belongs to the glycosyl hydrolase 28 family.

Its subcellular location is the secreted. Pectinolytic enzyme involved in the degradation of xylogalacturonan (xga), a galacturonan backbone heavily substituted with xylose, and which is one important component of the hairy regions of pectin. Activity requires a galacturonic acid backbone substituted with xylose. This Aspergillus fumigatus (strain ATCC MYA-4609 / CBS 101355 / FGSC A1100 / Af293) (Neosartorya fumigata) protein is Probable endo-xylogalacturonan hydrolase A (xghA).